Consider the following 746-residue polypeptide: Methyl-CpG-binding domain-containing protein 13 (746 aa).

2 short sequence motifs (nuclear localization signal) span residues 13–20 (ERKVEIRV) and 44–51 (IKKLEITN). In terms of domain architecture, MBD spans 29-104 (VIVEKSAAQG…KESDIEDDDS (76 aa)). Disordered regions lie at residues 131 to 157 (IDDV…MTSD), 169 to 283 (LGKK…PTPE), 295 to 328 (PLDD…KTRT), 348 to 479 (TKVQ…LKSP), 518 to 562 (TAAG…SGSA), and 696 to 746 (EPDT…FSKD). Over residues 169 to 180 (LGKKEEVKDPIE) the composition is skewed to basic and acidic residues. The span at 190 to 199 (RSQTKASTTE) shows a compositional bias: polar residues. The segment covering 244–260 (SSEKRITRSKVEEKKNE) has biased composition (basic and acidic residues). Residues 256–263 (EKKNELSN) carry the Nuclear localization signal motif. Polar residues predominate over residues 427-451 (VAQSCNEQSSQKPHAAAATSNNRVS). The segment covering 465–476 (VGRKPSKDKKTL) has biased composition (basic residues). 2 stretches are compositionally biased toward polar residues: residues 529-546 (PKAN…SPLR) and 702-730 (KSQG…TNKT). Over residues 732–746 (GKPDDLRFTQSFSKD) the composition is skewed to basic and acidic residues.

The protein resides in the nucleus. Probable transcriptional regulator. This Arabidopsis thaliana (Mouse-ear cress) protein is Methyl-CpG-binding domain-containing protein 13 (MBD13).